Here is an 803-residue protein sequence, read N- to C-terminus: MutS protein homolog 4 (803 aa).

557 to 564 (GANMSGKS) contacts ATP.

Belongs to the DNA mismatch repair MutS family. In terms of assembly, heterooligomer of MSH4 and MSH5.

Functionally, involved in meiotic recombination. Facilitate crossovers between homologs during meiosis. The sequence is that of MutS protein homolog 4 (MSH4) from Candida albicans (Yeast).